Consider the following 106-residue polypeptide: ATP-dependent Clp protease adapter protein ClpS (106 aa).

It belongs to the ClpS family. Binds to the N-terminal domain of the chaperone ClpA.

Involved in the modulation of the specificity of the ClpAP-mediated ATP-dependent protein degradation. The sequence is that of ATP-dependent Clp protease adapter protein ClpS from Cronobacter sakazakii (strain ATCC BAA-894) (Enterobacter sakazakii).